Consider the following 229-residue polypeptide: MKKIVIAIDGHSSSGKSTMAKDLAKEIGYTYIDTGAMYRAVTLYCIQHGFFEGEKIKEEELKASIHDIDISFRLNAETGRPDTYLNGVNVEKEIRGMEVADKVSPVATLGFVRRALVAKQQEMGKAKGIVMDGRDIGTVVFPDAELKLFVTASPEVRAKRRVDELEAKGIPASYEEVLENVKKRDYIDSTREESPLRQADDALVLDNSHMTLEEQKAWLLEQYHKAIGS.

Residue 10–18 (GHSSSGKST) participates in ATP binding.

Belongs to the cytidylate kinase family. Type 1 subfamily.

It localises to the cytoplasm. It catalyses the reaction CMP + ATP = CDP + ADP. The catalysed reaction is dCMP + ATP = dCDP + ADP. This chain is Cytidylate kinase, found in Parabacteroides distasonis (strain ATCC 8503 / DSM 20701 / CIP 104284 / JCM 5825 / NCTC 11152).